A 447-amino-acid chain; its full sequence is Probable 7-dehydrocholesterol reductase (447 aa).

The next 8 membrane-spanning stretches (helical) occupy residues 24–44 (LTTAAMFMFCPFIILVFYLIT), 71–91 (IPSFKINVLGACLLWIVFQLI), 102–124 (FVPHYVGGIKAGHITPAGNLVYY), 133–153 (IITHVLVIMSCYYGLFSPTII), 157–177 (WGSIFWSVNIIGYLITFLAYF), 244–264 (YVSNSMILVIILQLIYIVDFF), 281–301 (FGWMLAWGDTVWLPFGYTLQA), and 309–329 (IDLSTGFFNLVFVMGIIGYII). NADP(+) contacts are provided by residues K337, R341, I367, W372, and 379–380 (NY). Residues 393–413 (ACGFSHFIPYFYCVYMTILLV) traverse the membrane as a helical segment. NADP(+) contacts are provided by residues D419, 423–427 (CSRKY), and Y434.

The protein belongs to the ERG4/ERG24 family.

The protein resides in the membrane. It catalyses the reaction cholesterol + NADP(+) = 7-dehydrocholesterol + NADPH + H(+). The protein operates within steroid biosynthesis; cholesterol biosynthesis. Functionally, catalyzes the last step of the cholesterol synthesis pathway, which transforms cholesta-5,7-dien-3beta-ol (7-dehydrocholesterol,7-DHC) into cholesterol by reducing the C7-C8 double bond of its sterol core. In Acanthamoeba polyphaga (Amoeba), this protein is Probable 7-dehydrocholesterol reductase (DHCR7).